The primary structure comprises 400 residues: Succinate--glutarate CoA-transferase (400 aa).

Aspartate 181 functions as the Nucleophile in the catalytic mechanism.

This sequence belongs to the CoA-transferase III family.

The catalysed reaction is glutarate + succinyl-CoA = glutaryl-CoA + succinate. It participates in amino-acid degradation. The protein operates within cofactor biosynthesis; biotin biosynthesis. Its function is as follows. Is involved in L-lysine degradation and provides glutaryl-CoA for biotin synthesis. Catalyzes the conversion of glutarate to glutaryl-CoA via the transfer of CoA from succinyl-CoA. In Agrobacterium fabrum (strain C58 / ATCC 33970) (Agrobacterium tumefaciens (strain C58)), this protein is Succinate--glutarate CoA-transferase.